We begin with the raw amino-acid sequence, 269 residues long: Hydroxyethylthiazole kinase (269 aa).

Methionine 42 is a substrate binding site. 2 residues coordinate ATP: arginine 118 and serine 164. Residue glycine 191 coordinates substrate.

Belongs to the Thz kinase family. Requires Mg(2+) as cofactor.

The enzyme catalyses 5-(2-hydroxyethyl)-4-methylthiazole + ATP = 4-methyl-5-(2-phosphooxyethyl)-thiazole + ADP + H(+). It participates in cofactor biosynthesis; thiamine diphosphate biosynthesis; 4-methyl-5-(2-phosphoethyl)-thiazole from 5-(2-hydroxyethyl)-4-methylthiazole: step 1/1. In terms of biological role, catalyzes the phosphorylation of the hydroxyl group of 4-methyl-5-beta-hydroxyethylthiazole (THZ). This chain is Hydroxyethylthiazole kinase, found in Listeria monocytogenes serovar 1/2a (strain ATCC BAA-679 / EGD-e).